A 503-amino-acid chain; its full sequence is Rhomboid-type serine protease 2 (503 aa).

The span at 1–11 (MAAQSYYNGAY) shows a compositional bias: polar residues. Positions 1–66 (MAAQSYYNGA…SLRYSQQSIG (66 aa)) are disordered. The Cytoplasmic portion of the chain corresponds to 1–136 (MAAQSYYNGA…QKKKGFFQKK (136 aa)). A helical membrane pass occupies residues 137-157 (IAYVTYILTIAQIIVFIVELV). The Extracellular segment spans residues 158 to 253 (KMGQLTGSPI…DKPAPDQWFR (96 aa)). A helical transmembrane segment spans residues 254–274 (FIIPMFLHSGFVHIGFNLLVQ). Residues 275–283 (MTMGADMER) are Cytoplasmic-facing. Residues 284-304 (MIGWWRYGLVYLSSGIWGFVL) form a helical membrane-spanning segment. Residues 305 to 316 (GGNYAGQGEASC) lie on the Extracellular side of the membrane. Residues 317-337 (GCSGALFGILALFVLDLLYGW) traverse the membrane as a helical segment. The active-site Nucleophile is serine 319. Residues 338–342 (NDRQN) are Cytoplasmic-facing. The helical transmembrane segment at 343 to 363 (PWVELIIMVLGIAVSFVLGLL) threads the bilayer. The Extracellular segment spans residues 364-365 (PG). The helical transmembrane segment at 366-386 (LDNFSHLGGFTMGLALGLCVM) threads the bilayer. Residue histidine 371 is part of the active site. The Cytoplasmic segment spans residues 387 to 449 (RSPNALRERI…FAGRKPLWWA (63 aa)). A helical transmembrane segment spans residues 450 to 470 (WWLVRLGALVAVLIGFILLIV). At 471–503 (NFYKYPSSNCSWCYRFSCLPVNGWCDQGNLFSR) the chain is on the extracellular side.

This sequence belongs to the peptidase S54 family.

The protein localises to the membrane. The catalysed reaction is Cleaves type-1 transmembrane domains using a catalytic dyad composed of serine and histidine that are contributed by different transmembrane domains.. Functionally, probable rhomboid-type serine protease that catalyzes intramembrane proteolysis. In Emericella nidulans (strain FGSC A4 / ATCC 38163 / CBS 112.46 / NRRL 194 / M139) (Aspergillus nidulans), this protein is Rhomboid-type serine protease 2.